A 333-amino-acid chain; its full sequence is Adenosine deaminase (333 aa).

2 residues coordinate Zn(2+): H12 and H14. Substrate is bound by residues H14, D16, and G170. H197 is a binding site for Zn(2+). E200 acts as the Proton donor in catalysis. Residue D278 participates in Zn(2+) binding. Position 279 (D279) interacts with substrate.

Belongs to the metallo-dependent hydrolases superfamily. Adenosine and AMP deaminases family. Adenosine deaminase subfamily. Requires Zn(2+) as cofactor.

It catalyses the reaction adenosine + H2O + H(+) = inosine + NH4(+). The enzyme catalyses 2'-deoxyadenosine + H2O + H(+) = 2'-deoxyinosine + NH4(+). Its function is as follows. Catalyzes the hydrolytic deamination of adenosine and 2-deoxyadenosine. This chain is Adenosine deaminase, found in Escherichia coli O45:K1 (strain S88 / ExPEC).